Consider the following 393-residue polypeptide: Golgi membrane protein 1 (393 aa).

Met1 carries the N-acetylmethionine modification. The Cytoplasmic segment spans residues Met1–Lys12. A helical; Signal-anchor for type II membrane protein membrane pass occupies residues Ser13–Ala35. Over Ser36–Ala393 the chain is Lumenal. A coiled-coil region spans residues Val40–Glu183. Asn109 and Asn144 each carry an N-linked (GlcNAc...) asparagine glycan. 2 disordered regions span residues Lys180–Asn247 and His284–Asn352. The residue at position 187 (Ser187) is a Phosphoserine. 2 stretches are compositionally biased toward polar residues: residues Glu192–Leu201 and Asn227–Asn247. Asn227 is a glycosylation site (N-linked (GlcNAc...) asparagine). A compositionally biased stretch (basic and acidic residues) spans Arg294–Glu320. Acidic residues predominate over residues Asp330–Ala339.

Belongs to the GOLM family. As to quaternary structure, interacts with DYM. In terms of processing, glycosylated. Post-translationally, phosphorylation sites are present in the extracellular medium.

The protein resides in the golgi apparatus. The protein localises to the cis-Golgi network membrane. Its function is as follows. Unknown. Cellular response protein to viral infection. The sequence is that of Golgi membrane protein 1 (Golm1) from Mus musculus (Mouse).